A 218-amino-acid chain; its full sequence is GTP cyclohydrolase 1 (218 aa).

Residues Cys-109, His-112, and Cys-180 each contribute to the Zn(2+) site.

It belongs to the GTP cyclohydrolase I family. As to quaternary structure, toroid-shaped homodecamer, composed of two pentamers of five dimers.

The enzyme catalyses GTP + H2O = 7,8-dihydroneopterin 3'-triphosphate + formate + H(+). It participates in cofactor biosynthesis; 7,8-dihydroneopterin triphosphate biosynthesis; 7,8-dihydroneopterin triphosphate from GTP: step 1/1. The polypeptide is GTP cyclohydrolase 1 (Aeromonas salmonicida (strain A449)).